The primary structure comprises 294 residues: Nucleotide-binding protein Dtur_1129 (294 aa).

10–17 (GLSGAGKS) contacts ATP. Residue 61-64 (DIRT) coordinates GTP.

The protein belongs to the RapZ-like family.

Functionally, displays ATPase and GTPase activities. The chain is Nucleotide-binding protein Dtur_1129 from Dictyoglomus turgidum (strain DSM 6724 / Z-1310).